A 297-amino-acid chain; its full sequence is Acetylglutamate kinase (297 aa).

Substrate is bound by residues 70–71 (GG), arginine 92, and asparagine 194.

This sequence belongs to the acetylglutamate kinase family. ArgB subfamily.

It is found in the cytoplasm. The catalysed reaction is N-acetyl-L-glutamate + ATP = N-acetyl-L-glutamyl 5-phosphate + ADP. Its pathway is amino-acid biosynthesis; L-arginine biosynthesis; N(2)-acetyl-L-ornithine from L-glutamate: step 2/4. In terms of biological role, catalyzes the ATP-dependent phosphorylation of N-acetyl-L-glutamate. The chain is Acetylglutamate kinase from Janthinobacterium sp. (strain Marseille) (Minibacterium massiliensis).